Consider the following 341-residue polypeptide: Syntaxin-122 (341 aa).

Position 1 is an N-acetylmethionine (Met1). 2 disordered regions span residues 1 to 22 (MNDLLSGSFKTSVADGSSPPHS) and 111 to 137 (LDRANEVNRSLPESGPGSSSDRQRTSV). Over 1–284 (MNDLLSGSFK…ARFYQKNTRK (284 aa)) the chain is Cytoplasmic. Composition is skewed to polar residues over residues 8 to 21 (SFKTSVADGSSPPH) and 126 to 137 (PGSSSDRQRTSV). Residues 64-185 (CHNLRSSNEQ…GEYPDEATLE (122 aa)) adopt a coiled-coil conformation. Residues 213–275 (INEIQERHDA…RSGADRLVKA (63 aa)) enclose the t-SNARE coiled-coil homology domain. The chain crosses the membrane as a helical; Anchor for type IV membrane protein span at residues 285–305 (WTCFAILLLLIIVVLIVVFTV). Over 306–341 (KPWESNGGGGGGAPRQATPVQAQPPPPPAVNRRLLR) the chain is Vesicular. The segment at 312-341 (GGGGGGAPRQATPVQAQPPPPPAVNRRLLR) is disordered.

It belongs to the syntaxin family. As to quaternary structure, part of the t-SNARE complex.

It localises to the membrane. Its function is as follows. Vesicle trafficking protein that functions in the secretory pathway. This is Syntaxin-122 (SYP122) from Arabidopsis thaliana (Mouse-ear cress).